The chain runs to 169 residues: Transmembrane protein B169L (169 aa).

A run of 2 helical transmembrane segments spans residues 28-48 and 60-80; these read NPFI…FAIC and TAIY…YVLN. Asn88 is a glycosylation site (N-linked (GlcNAc...) asparagine; by host). The tract at residues 107–169 is disordered; sequence DEIIPPISPP…EVIMPSQYNN (63 aa). Residues 144–154 are compositionally biased toward low complexity; sequence SKPASSADSKP.

This sequence belongs to the asfivirus B169L family.

It is found in the host membrane. Its subcellular location is the virion. The chain is Transmembrane protein B169L from Ornithodoros (relapsing fever ticks).